Consider the following 115-residue polypeptide: Probable 4-amino-4-deoxy-L-arabinose-phosphoundecaprenol flippase subunit ArnE (115 aa).

3 helical membrane-spanning segments follow: residues 42–62 (PWPWLALLALGLGLLCWLLLL), 65–85 (VEVGSAYPMLALNFVLVTLAA), and 93–112 (VDRRHLAGLLLIVAGVVLLG). The EamA domain maps to 46-113 (LALLALGLGL…IVAGVVLLGR (68 aa)).

This sequence belongs to the ArnE family. Heterodimer of ArnE and ArnF.

Its subcellular location is the cell inner membrane. The protein operates within bacterial outer membrane biogenesis; lipopolysaccharide biosynthesis. Its function is as follows. Translocates 4-amino-4-deoxy-L-arabinose-phosphoundecaprenol (alpha-L-Ara4N-phosphoundecaprenol) from the cytoplasmic to the periplasmic side of the inner membrane. This chain is Probable 4-amino-4-deoxy-L-arabinose-phosphoundecaprenol flippase subunit ArnE, found in Pseudomonas aeruginosa (strain UCBPP-PA14).